The chain runs to 233 residues: Small ribosomal subunit protein uS3 (233 aa).

Residues 39 to 107 (IRAFLKRKLY…DVNINIKEER (69 aa)) form the KH type-2 domain. Positions 212–222 (MQPEKTEESAP) are enriched in basic and acidic residues. The disordered stretch occupies residues 212-233 (MQPEKTEESAPAKKPRRTRRGK). Positions 224-233 (KKPRRTRRGK) are enriched in basic residues.

Belongs to the universal ribosomal protein uS3 family. As to quaternary structure, part of the 30S ribosomal subunit. Forms a tight complex with proteins S10 and S14.

In terms of biological role, binds the lower part of the 30S subunit head. Binds mRNA in the 70S ribosome, positioning it for translation. The polypeptide is Small ribosomal subunit protein uS3 (Campylobacter jejuni subsp. jejuni serotype O:6 (strain 81116 / NCTC 11828)).